The chain runs to 374 residues: Alcohol dehydrogenase class-3 (374 aa).

At A2 the chain carries N-acetylalanine. Residues C45, H67, C97, C100, C103, C111, and C174 each coordinate Zn(2+). Position 233 is an N6-succinyllysine (K233). S247 bears the Phosphoserine mark. K315 bears the N6-succinyllysine mark. Phosphoserine occurs at positions 324 and 351.

This sequence belongs to the zinc-containing alcohol dehydrogenase family. Class-III subfamily. As to quaternary structure, homodimer. Zn(2+) is required as a cofactor. As to expression, ubiquitous.

It is found in the cytoplasm. The enzyme catalyses a primary alcohol + NAD(+) = an aldehyde + NADH + H(+). The catalysed reaction is a secondary alcohol + NAD(+) = a ketone + NADH + H(+). It carries out the reaction S-(hydroxymethyl)glutathione + NADP(+) = S-formylglutathione + NADPH + H(+). It catalyses the reaction S-(hydroxymethyl)glutathione + NAD(+) = S-formylglutathione + NADH + H(+). The enzyme catalyses 20-oxo-(5Z,8Z,11Z,14Z)-eicosatetraenoate + NAD(+) + H2O = (5Z,8Z,11Z,14Z)-eicosatetraenedioate + NADH + 2 H(+). The catalysed reaction is 20-hydroxy-(5Z,8Z,11Z,14Z)-eicosatetraenoate + NAD(+) = 20-oxo-(5Z,8Z,11Z,14Z)-eicosatetraenoate + NADH + H(+). It carries out the reaction S-nitrosoglutathione + NADH + H(+) = S-(hydroxysulfenamide)glutathione + NAD(+). Catalyzes the oxidation of long-chain primary alcohols and the oxidation of S-(hydroxymethyl) glutathione. Also oxidizes long chain omega-hydroxy fatty acids, such as 20-HETE, producing both the intermediate aldehyde, 20-oxoarachidonate and the end product, a dicarboxylic acid, (5Z,8Z,11Z,14Z)-eicosatetraenedioate. Class-III ADH is remarkably ineffective in oxidizing ethanol. Required for clearance of cellular formaldehyde, a cytotoxic and carcinogenic metabolite that induces DNA damage. Also acts as a S-nitroso-glutathione reductase by catalyzing the NADH-dependent reduction of S-nitrosoglutathione, thereby regulating protein S-nitrosylation. The polypeptide is Alcohol dehydrogenase class-3 (Mus musculus (Mouse)).